Consider the following 232-residue polypeptide: Ubiquinone biosynthesis O-methyltransferase (232 aa).

Residues arginine 36, glycine 55, aspartate 76, and leucine 120 each contribute to the S-adenosyl-L-methionine site.

It belongs to the methyltransferase superfamily. UbiG/COQ3 family.

The catalysed reaction is a 3-demethylubiquinol + S-adenosyl-L-methionine = a ubiquinol + S-adenosyl-L-homocysteine + H(+). It catalyses the reaction a 3-(all-trans-polyprenyl)benzene-1,2-diol + S-adenosyl-L-methionine = a 2-methoxy-6-(all-trans-polyprenyl)phenol + S-adenosyl-L-homocysteine + H(+). Its pathway is cofactor biosynthesis; ubiquinone biosynthesis. Functionally, O-methyltransferase that catalyzes the 2 O-methylation steps in the ubiquinone biosynthetic pathway. This chain is Ubiquinone biosynthesis O-methyltransferase, found in Pseudomonas paraeruginosa (strain DSM 24068 / PA7) (Pseudomonas aeruginosa (strain PA7)).